The following is a 371-amino-acid chain: Neuropeptide Y receptor type 6 (371 aa).

The Extracellular portion of the chain corresponds to 1 to 31; sequence MEVSLNDPASNKTSAKSNSSAFFYFESCQSP. Asparagine 11 and asparagine 18 each carry an N-linked (GlcNAc...) asparagine glycan. A helical membrane pass occupies residues 32 to 52; it reads SLALLLLLIAYTVVLIMGICG. At 53 to 72 the chain is on the cytoplasmic side; it reads NLSLITIIFKKQREAQNVTN. The helical transmembrane segment at 73-93 threads the bilayer; sequence ILIANLSLSDILVCVMCIPFT. Topologically, residues 94 to 111 are extracellular; it reads AIYTLMDRWIFGNTMCKL. Cysteine 109 and cysteine 196 are oxidised to a cystine. The helical transmembrane segment at 112–132 threads the bilayer; it reads TSYVQSVSISVSIFSLVLIAI. Residues 133–150 are Cytoplasmic-facing; sequence ERYQLIVNPRGWKPSASH. The chain crosses the membrane as a helical span at residues 151–171; the sequence is AYWGIMLIWLFSLLLSIPLLL. At 172 to 213 the chain is on the extracellular side; it reads SYHLTDEPFRNLSLPTDLYSHHVVCVEHWPSKTNQLLYSTSL. An N-linked (GlcNAc...) asparagine glycan is attached at asparagine 182. Residues 214–234 traverse the membrane as a helical segment; sequence IMLQYFVPLGFMFICYLKIVI. The Cytoplasmic portion of the chain corresponds to 235-263; the sequence is CLHKRNSKIDRRRENESRLTENKRINTML. A helical transmembrane segment spans residues 264 to 284; the sequence is ISIVVTFAACWLPLNTFNVIF. Over 285-297 the chain is Extracellular; that stretch reads DWYHEVLMSCHHD. A helical transmembrane segment spans residues 298-318; the sequence is LVFAICHLVAMVSTCINPLFY. At 319–371 the chain is on the cytoplasmic side; it reads GFLNRNFQKDLVVLIHHCLCFALRERYENIAISTLHTDESKGSLRVAHIPAGI. Residue cysteine 336 is the site of S-palmitoyl cysteine attachment.

This sequence belongs to the G-protein coupled receptor 1 family. In terms of tissue distribution, expressed in hippocampus, striatum, hypothalamus, cerebellum, small intestine, colon and adrenal gland.

Its subcellular location is the cell membrane. Functionally, receptor for neuropeptide Y and peptide YY. The activity of this receptor is mediated by G proteins that inhibit adenylate cyclase activity. The polypeptide is Neuropeptide Y receptor type 6 (NPY6R) (Oryctolagus cuniculus (Rabbit)).